Reading from the N-terminus, the 644-residue chain is Exoribonuclease 2 (644 aa).

The region spanning 189–516 (REDLTALDFV…NHRLLKAVIK (328 aa)) is the RNB domain. Residues 561–643 (DTRFAAEIVD…ETRSIIARPV (83 aa)) enclose the S1 motif domain.

The protein belongs to the RNR ribonuclease family. RNase II subfamily.

The protein resides in the cytoplasm. The enzyme catalyses Exonucleolytic cleavage in the 3'- to 5'-direction to yield nucleoside 5'-phosphates.. In terms of biological role, involved in mRNA degradation. Hydrolyzes single-stranded polyribonucleotides processively in the 3' to 5' direction. This chain is Exoribonuclease 2, found in Escherichia coli O45:K1 (strain S88 / ExPEC).